Reading from the N-terminus, the 24-residue chain is Cupiennin-5a (24 aa).

In terms of tissue distribution, expressed by the venom gland.

It is found in the secreted. This Cupiennius salei (American wandering spider) protein is Cupiennin-5a.